The primary structure comprises 262 residues: Ribosomal RNA small subunit methyltransferase A (262 aa).

Residues His13, Leu15, Gly40, Glu61, Asp85, and Asn103 each contribute to the S-adenosyl-L-methionine site.

The protein belongs to the class I-like SAM-binding methyltransferase superfamily. rRNA adenine N(6)-methyltransferase family. RsmA subfamily.

Its subcellular location is the cytoplasm. The enzyme catalyses adenosine(1518)/adenosine(1519) in 16S rRNA + 4 S-adenosyl-L-methionine = N(6)-dimethyladenosine(1518)/N(6)-dimethyladenosine(1519) in 16S rRNA + 4 S-adenosyl-L-homocysteine + 4 H(+). In terms of biological role, specifically dimethylates two adjacent adenosines (A1518 and A1519) in the loop of a conserved hairpin near the 3'-end of 16S rRNA in the 30S particle. May play a critical role in biogenesis of 30S subunits. The protein is Ribosomal RNA small subunit methyltransferase A of Bordetella petrii (strain ATCC BAA-461 / DSM 12804 / CCUG 43448).